The primary structure comprises 177 residues: Bifunctional protein PyrR (177 aa).

Positions 99–111 (VVLVDDVLYTGRT) match the PRPP-binding motif.

This sequence belongs to the purine/pyrimidine phosphoribosyltransferase family. PyrR subfamily.

It carries out the reaction UMP + diphosphate = 5-phospho-alpha-D-ribose 1-diphosphate + uracil. Its function is as follows. Regulates the transcription of the pyrimidine nucleotide (pyr) operon in response to exogenous pyrimidines. Functionally, also displays a weak uracil phosphoribosyltransferase activity which is not physiologically significant. This is Bifunctional protein PyrR from Akkermansia muciniphila (strain ATCC BAA-835 / DSM 22959 / JCM 33894 / BCRC 81048 / CCUG 64013 / CIP 107961 / Muc).